Here is a 366-residue protein sequence, read N- to C-terminus: Transmembrane protein 26 (366 aa).

Helical transmembrane passes span 4–24 (LVLLKALVTRLLFLLHSLVAV), 36–56 (YWLLALLNLLLVLETVLTLKF), and 64–84 (WLSPAIFVYLVNIMPSLWLLE). N-linked (GlcNAc...) asparagine glycosylation occurs at asparagine 110. Helical transmembrane passes span 138–158 (MVCEPVWTLGLHQTLLLILII), 176–196 (ELLLMFVGTAADILEFTTETL), 208–228 (VSGILVVWTWSMLQFPLDLAV), 258–278 (IGLSFFIQDGPFLVVRLVLMI), and 282–302 (VINHMLVFFAVKNSLVMALHF). Positions 319–329 (HPESPKPEHSG) are enriched in basic and acidic residues. The disordered stretch occupies residues 319–366 (HPESPKPEHSGPDQPSESGPSEWEDASPEALPLRTSPVTSEESYPTTP). Residues 354–366 (SPVTSEESYPTTP) show a composition bias toward polar residues.

The protein localises to the membrane. In Mus musculus (Mouse), this protein is Transmembrane protein 26 (Tmem26).